Here is a 723-residue protein sequence, read N- to C-terminus: BBSome complex assembly protein BBS10 (723 aa).

This sequence belongs to the TCP-1 chaperonin family. As to quaternary structure, component of a complex composed at least of MKKS, BBS10, BBS12, TCP1, CCT2, CCT3, CCT4, CCT5 and CCT8.

Its subcellular location is the cell projection. It is found in the cilium. Functionally, probable molecular chaperone that assists the folding of proteins upon ATP hydrolysis. Plays a role in the assembly of BBSome, a complex involved in ciliogenesis regulating transports vesicles to the cilia. Involved in adipogenic differentiation. The polypeptide is BBSome complex assembly protein BBS10 (BBS10) (Homo sapiens (Human)).